The chain runs to 270 residues: METVLEQLAGLESFPSPYFDEDDFFTDHSSRDALDADDFLEDDVDFLAGQIQDYYRDSRVLHTDDDYCDAGNFSFSSSSSGGFPYECGDGGCDLSPGMKGGSLVMKRRRRLRSDAEMQQLRQAANVRERRRMQSINDAFEGLRSHIPTLPYEKRLSKVDTLRLAIGYINFLSEMVQSDLPLRNPNSDSGNQPKKVIICHRGTRSPSPSDPDYGLPPLAGHSLSWTDEKQLRDQNVVRTAKVWTPEDPRKLNKSPFSNIENEPPLTLCLDM.

One can recognise a bHLH domain in the interval Gln119–Leu171.

Its subcellular location is the nucleus. Its function is as follows. Transcription factor implicated in the cell fate determination in various organs. Binds to the E-box consensus sequence 5'-CANNTG-3'. Acts together with pdx1 to induce the pancreatic lineage within the endoderm. Plays a central role in directing the differentiation of retinal progenitors towards horizontal and amacrine fates. The polypeptide is Pancreas transcription factor 1 subunit alpha (ptf1a) (Xenopus laevis (African clawed frog)).